A 143-amino-acid polypeptide reads, in one-letter code: Transcriptional regulator SlyA (143 aa).

The HTH marR-type domain maps to 2–135 (ESTLGSDLAR…LSGLIDKLEK (134 aa)). Positions 49-72 (QIQLAKAIGIEQPSLVRTLDQLEE) form a DNA-binding region, H-T-H motif.

The protein belongs to the SlyA family. Homodimer.

Functionally, transcription regulator that can specifically activate or repress expression of target genes. The chain is Transcriptional regulator SlyA from Yersinia pestis (strain Pestoides F).